Reading from the N-terminus, the 476-residue chain is Transmembrane transporter FPSE_08127 (476 aa).

The chain crosses the membrane as a helical span at residues 72–92 (ILAIPAALGALGSIGGSLCII). N-linked (GlcNAc...) asparagine glycosylation occurs at asparagine 111. 9 helical membrane-spanning segments follow: residues 133 to 153 (LVGVQIIIAQTLVTAGGVVAI), 164 to 184 (GTCTVAFGLISAIAVTAFSAI), 192 to 212 (WLTWIGFITFVIGVFIFVVAV), 231 to 251 (WAPIAYPSFVVGMVSVTNIFI), 275 to 295 (ACLVAGFIVGAMYLSFSLVIY), 317 to 337 (VAYGVSLPGLILGVGIYQHVA), 364 to 384 (LGINIALGTAAFIVAEAVPIL), 387 to 407 (LLGLAGAICLAPFSLIFPALL), and 431 to 451 (LIMMFGFFMMIAGFYSVVVLI).

The protein belongs to the amino acid/polyamine transporter 2 family.

It is found in the membrane. Transmembrane transporter; part of the Fusarium detoxification of benzoxazolinone cluster involved in the degradation of benzoxazolinones produced by the host plant. Maize, wheat, and rye produce the 2 benzoxazinone phytoanticipins 2,4-dihy-droxy-7-methoxy-1,4-benzoxazin-3-one (DIMBOA) and 2,4-dihydroxy-1,4-benzoxazin-3-one (DIBOA) that, due to their inherent instability once released, spontaneously degrade to the more stable corresponding benzoxazolinones, 6-methoxy-2-benzoxazolinone (MBOA) and 2-benzoxazolinone (BOA), respectively. FPSE_08127 is proposed to shuttle metabolites of benzoxazolinone degradation. This Fusarium pseudograminearum (strain CS3096) (Wheat and barley crown-rot fungus) protein is Transmembrane transporter FPSE_08127.